The primary structure comprises 810 residues: Plasminogen (810 aa).

An N-terminal signal peptide occupies residues 1 to 19; that stretch reads MQRKELVLLFLLFLQPGHG. The region spanning 20–98 is the PAN domain; that stretch reads IPLDDYVTTQ…RDVILFEKKM (79 aa). Disulfide bonds link C49/C73, C53/C61, C103/C181, C124/C164, C152/C176, C185/C262, C188/C316, C206/C245, C234/C257, C275/C352, C296/C335, C324/C347, C379/C456, C400/C439, C428/C451, C482/C561, C503/C544, C532/C556, C569/C685, C579/C586, C607/C623, C699/C766, C729/C745, and C756/C784. Kringle domains follow at residues 103–181, 185–262, 275–352, 379–456, and 482–561; these read CKVG…IIQC, CMHC…IPRC, CLMG…IPDC, CYQG…LKKC, and CIID…IPHC. N339 carries N-linked (GlcNAc...) asparagine glycosylation. Residues 398 to 418 form a disordered region; it reads KKCQPWTSMRPHRHSKTPENY. Positions 582–808 constitute a Peptidase S1 domain; the sequence is RVGGCVAHPH…YVSWLQDVMR (227 aa). S598 carries the phosphoserine modification. Active-site charge relay system residues include H622 and D665. Residue S760 is the Charge relay system of the active site.

Belongs to the peptidase S1 family. Plasminogen subfamily. As to quaternary structure, interacts with CSPG4 and AMOT. Interacts (via the Kringle domains) with HRG; the interaction tethers PLG to the cell surface and enhances its activation. Interacts (via Kringle 4 domain) with ADA; the interaction stimulates PLG activation when in complex with DPP4. Angiostatin: Interacts with ATP5F1A; the interaction inhibits most of the angiogenic effects of angiostatin. Post-translationally, in the presence of the inhibitor, the activation involves only cleavage after Arg-582, yielding two chains held together by two disulfide bonds. In the absence of the inhibitor, the activation involves additionally the removal of the activation peptide.

It localises to the secreted. The catalysed reaction is Preferential cleavage: Lys-|-Xaa &gt; Arg-|-Xaa, higher selectivity than trypsin. Converts fibrin into soluble products.. Its activity is regulated as follows. Converted into plasmin by plasminogen activators, both plasminogen and its activator being bound to fibrin. Cannot be activated with streptokinase. In terms of biological role, plasmin dissolves the fibrin of blood clots and acts as a proteolytic factor in a variety of other processes including embryonic development, tissue remodeling, tumor invasion, and inflammation. In ovulation, weakens the walls of the Graafian follicle. It activates the urokinase-type plasminogen activator, collagenases and several complement zymogens, such as C1, C4 and C5. Cleavage of fibronectin and laminin leads to cell detachment and apoptosis. Also cleaves fibrin, thrombospondin and von Willebrand factor. Its role in tissue remodeling and tumor invasion may be modulated by CSPG4. Binds to cells. In Erinaceus europaeus (Western European hedgehog), this protein is Plasminogen (PLG).